The primary structure comprises 151 residues: Apolipoprotein A-I (151 aa).

Positions 1 to 18 (MKAVVLTLAVLFLTGSQA) are cleaved as a signal peptide. Positions 19–24 (RHFWQQ) are excised as a propeptide. 2 repeat units span residues 67–88 (LKLL…EQIG) and 89–110 (PVTQ…QEMS). The 4 X approximate tandem repeats stretch occupies residues 67-143 (LKLLDNWDTL…EVELYRQKVA (77 aa)). At Met-109 the chain carries Methionine sulfoxide. Residues 111–121 (KDLEEVKQKVQ) form a 3; half-length repeat. The stretch at 122–143 (PYLDDFQKKWQEEVELYRQKVA) is repeat 4.

The protein belongs to the apolipoprotein A1/A4/E family. Homodimer. Interacts with APOA1BP and CLU. Component of a sperm activating protein complex (SPAP), consisting of APOA1, an immunoglobulin heavy chain, an immunoglobulin light chain and albumin. Interacts with NDRG1. Interacts with SCGB3A2. Interacts with NAXE and YJEFN3. Glycosylated. In terms of processing, palmitoylated. Post-translationally, phosphorylation sites are present in the extracellular medium. As to expression, major protein of plasma HDL, also found in chylomicrons.

The protein localises to the secreted. Participates in the reverse transport of cholesterol from tissues to the liver for excretion by promoting cholesterol efflux from tissues and by acting as a cofactor for the lecithin cholesterol acyltransferase (LCAT). As part of the SPAP complex, activates spermatozoa motility. The polypeptide is Apolipoprotein A-I (APOA1) (Panthera tigris altaica (Siberian tiger)).